We begin with the raw amino-acid sequence, 314 residues long: Nucleoprotein (314 aa).

Methionine 1 bears the N-acetylmethionine; by host mark. Tyrosine 38, tyrosine 41, arginine 118, lysine 237, and serine 266 together coordinate RNA.

The protein belongs to the tenuiviruses nucleocapsid protein family.

The protein localises to the virion. The protein resides in the host cytoplasm. Encapsidates the genome, protecting it from nucleases. The encapsidated genomic RNA is termed the nucleocapsid (NC), and serves as template for viral transcription and replication. This Wheat yellow head virus (WYHV) protein is Nucleoprotein.